The sequence spans 141 residues: VLSPADKTNVKATWDKIGGHAGEYGGEALERTFASFPTTKTYFPHFDLSPGSAQVKAHGKKVADALTNAVAHMDDLPAALSALSDLHAYKLRVDPVNFKLLSHCLLVTLACHHPAEFTPAVHASLDKFFSTVSTVLTSKYR.

The Globin domain occupies 1–141; sequence VLSPADKTNV…VSTVLTSKYR (141 aa). Ser3 carries the phosphoserine modification. Lys7 is modified (N6-succinyllysine). Residue Thr8 is modified to Phosphothreonine. The residue at position 11 (Lys11) is an N6-succinyllysine. Position 16 is an N6-acetyllysine; alternate (Lys16). N6-succinyllysine; alternate is present on Lys16. Residue Tyr24 is modified to Phosphotyrosine. Ser35 bears the Phosphoserine mark. At Lys40 the chain carries N6-succinyllysine. Ser49 carries the phosphoserine modification. Residue His58 coordinates O2. His87 is a heme b binding site. A Phosphoserine modification is found at Ser102. Thr108 is subject to Phosphothreonine. At Ser124 the chain carries Phosphoserine. Residues Thr134 and Thr137 each carry the phosphothreonine modification. Position 138 is a phosphoserine (Ser138).

The protein belongs to the globin family. Heterotetramer of two alpha chains and two beta chains. As to expression, red blood cells.

In terms of biological role, involved in oxygen transport from the lung to the various peripheral tissues. Functionally, hemopressin acts as an antagonist peptide of the cannabinoid receptor CNR1. Hemopressin-binding efficiently blocks cannabinoid receptor CNR1 and subsequent signaling. This Pteronura brasiliensis (Giant otter) protein is Hemoglobin subunit alpha (HBA).